The primary structure comprises 100 residues: Small ribosomal subunit protein uS14c (100 aa).

It belongs to the universal ribosomal protein uS14 family. Part of the 30S ribosomal subunit.

The protein resides in the plastid. It localises to the chloroplast. Its function is as follows. Binds 16S rRNA, required for the assembly of 30S particles. The sequence is that of Small ribosomal subunit protein uS14c from Aethionema cordifolium (Lebanon stonecress).